The primary structure comprises 571 residues: Proline--tRNA ligase (571 aa).

This sequence belongs to the class-II aminoacyl-tRNA synthetase family. ProS type 1 subfamily. As to quaternary structure, homodimer.

Its subcellular location is the cytoplasm. The enzyme catalyses tRNA(Pro) + L-proline + ATP = L-prolyl-tRNA(Pro) + AMP + diphosphate. Its function is as follows. Catalyzes the attachment of proline to tRNA(Pro) in a two-step reaction: proline is first activated by ATP to form Pro-AMP and then transferred to the acceptor end of tRNA(Pro). As ProRS can inadvertently accommodate and process non-cognate amino acids such as alanine and cysteine, to avoid such errors it has two additional distinct editing activities against alanine. One activity is designated as 'pretransfer' editing and involves the tRNA(Pro)-independent hydrolysis of activated Ala-AMP. The other activity is designated 'posttransfer' editing and involves deacylation of mischarged Ala-tRNA(Pro). The misacylated Cys-tRNA(Pro) is not edited by ProRS. This Actinobacillus pleuropneumoniae serotype 5b (strain L20) protein is Proline--tRNA ligase.